Consider the following 371-residue polypeptide: Beta sliding clamp (371 aa).

This sequence belongs to the beta sliding clamp family. Forms a ring-shaped head-to-tail homodimer around DNA which binds and tethers DNA polymerases and other proteins to the DNA. The DNA replisome complex has a single clamp-loading complex (3 tau and 1 each of delta, delta', psi and chi subunits) which binds 3 Pol III cores (1 core on the leading strand and 2 on the lagging strand) each with a beta sliding clamp dimer. Additional proteins in the replisome are other copies of gamma, psi and chi, Ssb, DNA helicase and RNA primase.

The protein localises to the cytoplasm. In terms of biological role, confers DNA tethering and processivity to DNA polymerases and other proteins. Acts as a clamp, forming a ring around DNA (a reaction catalyzed by the clamp-loading complex) which diffuses in an ATP-independent manner freely and bidirectionally along dsDNA. Initially characterized for its ability to contact the catalytic subunit of DNA polymerase III (Pol III), a complex, multichain enzyme responsible for most of the replicative synthesis in bacteria; Pol III exhibits 3'-5' exonuclease proofreading activity. The beta chain is required for initiation of replication as well as for processivity of DNA replication. This is Beta sliding clamp (dnaN) from Treponema pallidum (strain Nichols).